Here is a 418-residue protein sequence, read N- to C-terminus: Magnesium transporter MRS2-E (418 aa).

Residues 119–146 (DAAPSTNPAAADRGNGTEQGDQGSVPGL) form a disordered region. The stretch at 166–232 (VCLEHACKDL…RDELEHLLDD (67 aa)) forms a coiled coil. The span at 258–268 (DSHKYASVDHD) shows a compositional bias: basic and acidic residues. A disordered region spans residues 258-287 (DSHKYASVDHDDDREEEDHDDETESGRESS). Acidic residues predominate over residues 269 to 280 (DDREEEDHDDET). Residues 344–364 (GVMLTTATVVVTAGIVVVSLF) form a helical membrane-spanning segment. A Required for magnesium transport activity motif is present at residues 365–367 (GMN). Residues 389–409 (FWETTFGTVAGCIAIYLLAIY) form a helical membrane-spanning segment.

The protein belongs to the CorA metal ion transporter (MIT) (TC 1.A.35.5) family.

It localises to the membrane. Magnesium transporter that may mediate the influx of magnesium. This chain is Magnesium transporter MRS2-E (MRS2-E), found in Oryza sativa subsp. indica (Rice).